Here is a 191-residue protein sequence, read N- to C-terminus: Ribosomal RNA small subunit methyltransferase G (191 aa).

Residues glycine 62, phenylalanine 67, 111–112 (IE), and arginine 124 each bind S-adenosyl-L-methionine.

This sequence belongs to the methyltransferase superfamily. RNA methyltransferase RsmG family.

Its subcellular location is the cytoplasm. It carries out the reaction guanosine(527) in 16S rRNA + S-adenosyl-L-methionine = N(7)-methylguanosine(527) in 16S rRNA + S-adenosyl-L-homocysteine. Functionally, specifically methylates the N7 position of guanine in position 527 of 16S rRNA. The polypeptide is Ribosomal RNA small subunit methyltransferase G (Rickettsia akari (strain Hartford)).